We begin with the raw amino-acid sequence, 213 residues long: MASNQNQGSYHAGETKARTEEKTGQMMGATKQKAGQTTEATKQKAGETAEATKQKTGETAEAAKQKAAEAKDKTAQTAQAAKDKTYETAQAAKERAAQGKDQTGSALGEKTEAAKQKAAETTEAAKQKAAEATEAAKQKASDTAQYTKESAVAGKDKTGSVLQQAGETVVNAVVGAKDAVANTLGMGGDNTSATKDATTGATVKDTTTTTRNH.

Disordered regions lie at residues 1–158 (MASN…KDKT) and 182–213 (NTLG…TRNH). Positions 13–23 (GETKARTEEKT) are enriched in basic and acidic residues. LEA 11-mer repeat repeat units lie at residues 27-37 (MGATKQKAGQT), 38-48 (TEATKQKAGET), 49-59 (AEATKQKTGET), 60-70 (AEAAKQKAAEA), 78-88 (AQAAKDKTYET), 89-99 (AQAAKERAAQG), 111-121 (TEAAKQKAAET), 122-132 (TEAAKQKAAEA), and 133-143 (TEAAKQKASDT). The tract at residues 27–143 (MGATKQKAGQ…EAAKQKASDT (117 aa)) is 11 X 11 AA tandem repeats of T-E-A-A-K-Q-K-A-A-E-T. Basic and acidic residues-rich tracts occupy residues 41–74 (TKQK…KDKT), 81–98 (AKDK…RAAQ), and 109–140 (EKTE…KQKA). The span at 193–213 (ATKDATTGATVKDTTTTTRNH) shows a compositional bias: low complexity.

The protein belongs to the LEA type 4 family.

This is ABA-inducible protein PHV A1 (HVA1) from Hordeum vulgare (Barley).